Here is a 113-residue protein sequence, read N- to C-terminus: Sperm-associated antigen 11B (113 aa).

Positions 1-26 (MIPRLLPFFASLLFAALLFPGLSNAS) are cleaved as a signal peptide. Disulfide bonds link Cys-80-Cys-108, Cys-87-Cys-101, and Cys-91-Cys-109.

This sequence belongs to the beta-defensin family.

The protein localises to the secreted. Its function is as follows. Has antimicrobial activity against E.coli. Plays a role in the defense response in the male reproductive tract, contributing to sperm maturation, storage and protection. The sequence is that of Sperm-associated antigen 11B from Mus musculus (Mouse).